A 715-amino-acid polypeptide reads, in one-letter code: Targeting protein for Xklp2-B (715 aa).

Residues 36 to 167 form a disordered region; the sequence is NAENIPPDQK…LTMPATPTVL (132 aa). Residues 47–56 show a composition bias toward polar residues; the sequence is LSETSVNAEQ. Residues 85-103 are compositionally biased toward basic residues; it reads QTKRSARRMSKKHRQKILL. Over residues 104 to 115 the composition is skewed to basic and acidic residues; sequence KMKETHLEKETA. A compositionally biased stretch (polar residues) spans 141 to 152; that stretch reads QPTSSHHGTTSP. The residue at position 204 (Ser204) is a Phosphoserine; by plk1. 2 disordered regions span residues 260–291 and 314–337; these read PPTS…EEAS and RSRQ…TNPK.

It belongs to the TPX2 family. In terms of assembly, associates with microtubules. Interacts with aurka and plk1. Interacts with kif15. In terms of processing, phosphorylated during mitosis. Hyperphosphorylated upon assembly of microtubules.

It is found in the nucleus. The protein resides in the cytoplasm. The protein localises to the cytoskeleton. It localises to the spindle. Its subcellular location is the spindle pole. Functionally, spindle assembly factor. Required for normal assembly of mitotic spindles. Mediates the binding kif15 and aurka to spindle microtubules. Required for targeting kif15 to microtubule minus ends. Activates aurka by promoting its autophosphorylation and protects the phosphorylated residue against dephosphorylation. The polypeptide is Targeting protein for Xklp2-B (tpx2-b) (Xenopus laevis (African clawed frog)).